Here is a 136-residue protein sequence, read N- to C-terminus: Small ribosomal subunit protein bS16 (136 aa).

The segment covering 113–122 has biased composition (basic residues); it reads LALKSHRRSA. The tract at residues 113 to 136 is disordered; sequence LALKSHRRSAKKEAEAKAATGGEA.

This sequence belongs to the bacterial ribosomal protein bS16 family.

This Pelodictyon phaeoclathratiforme (strain DSM 5477 / BU-1) protein is Small ribosomal subunit protein bS16.